The primary structure comprises 309 residues: Glutaminase (309 aa).

Residues Ser-64, Asn-114, Glu-160, Asn-167, Tyr-191, Tyr-243, and Val-261 each coordinate substrate.

This sequence belongs to the glutaminase family. In terms of assembly, homotetramer.

It catalyses the reaction L-glutamine + H2O = L-glutamate + NH4(+). In Rhizobium etli (strain CIAT 652), this protein is Glutaminase.